A 97-amino-acid polypeptide reads, in one-letter code: RNA-binding protein Hfq (97 aa).

In terms of domain architecture, Sm spans 10-70 (DPFLNALRKE…ISTIVPARSV (61 aa)). Positions 74–97 (HENRPQAAPTSTLVQVETVQQPAE) are disordered. The span at 81-97 (APTSTLVQVETVQQPAE) shows a compositional bias: polar residues.

Belongs to the Hfq family. As to quaternary structure, homohexamer.

In terms of biological role, RNA chaperone that binds small regulatory RNA (sRNAs) and mRNAs to facilitate mRNA translational regulation in response to envelope stress, environmental stress and changes in metabolite concentrations. Also binds with high specificity to tRNAs. The sequence is that of RNA-binding protein Hfq from Neisseria meningitidis serogroup A / serotype 4A (strain DSM 15465 / Z2491).